Reading from the N-terminus, the 307-residue chain is Dihydroorotate dehydrogenase B (NAD(+)), catalytic subunit (307 aa).

Residues S22 and 46–47 (KA) contribute to the FMN site. Residues K46 and 70 to 74 (NAIGL) contribute to the substrate site. Residues N102 and N130 each contribute to the FMN site. N130 lines the substrate pocket. Catalysis depends on C133, which acts as the Nucleophile. The FMN site is built by K168 and I194. Substrate is bound at residue 195 to 196 (NT). FMN is bound by residues G220, 246–247 (GG), and 268–269 (GT).

It belongs to the dihydroorotate dehydrogenase family. Type 1 subfamily. In terms of assembly, heterotetramer of 2 PyrK and 2 PyrD type B subunits. FMN is required as a cofactor.

The protein resides in the cytoplasm. The catalysed reaction is (S)-dihydroorotate + NAD(+) = orotate + NADH + H(+). Its pathway is pyrimidine metabolism; UMP biosynthesis via de novo pathway; orotate from (S)-dihydroorotate (NAD(+) route): step 1/1. In terms of biological role, catalyzes the conversion of dihydroorotate to orotate with NAD(+) as electron acceptor. In Latilactobacillus sakei subsp. sakei (strain 23K) (Lactobacillus sakei subsp. sakei), this protein is Dihydroorotate dehydrogenase B (NAD(+)), catalytic subunit (pyrD).